The sequence spans 85 residues: uncharacterized protein (85 aa).

This is an uncharacterized protein from Bacillus subtilis (strain 168).